A 619-amino-acid polypeptide reads, in one-letter code: Manganese lipoxygenase (619 aa).

Positions 1 to 16 are cleaved as a signal peptide; that stretch reads MRVLVWIAGLAPLAVA. N-linked (GlcNAc...) asparagine glycosylation is found at Asn-32, Asn-42, Asn-62, Asn-86, Asn-164, and Asn-229. The 565-residue stretch at 55–619 folds into the Lipoxygenase domain; that stretch reads TLPCEDGNST…PGNIPFYLSV (565 aa). Mn(2+) is bound by residues His-298, His-303, His-483, and Asn-487. 2 N-linked (GlcNAc...) asparagine glycosylation sites follow: Asn-515 and Asn-549. Position 619 (Val-619) interacts with Mn(2+).

The protein belongs to the lipoxygenase family. Manganese lipoxygenase subfamily. The cofactor is Mn(2+).

It is found in the secreted. The enzyme catalyses (9Z,12Z)-octadecadienoate + O2 = (9S)-hydroperoxy-(10E,12Z)-octadecadienoate. It catalyses the reaction (9Z,12Z)-octadecadienoate + O2 = (11S)-hydroperoxy-(9Z,12Z)-octadecadienoate. It carries out the reaction (9Z,12Z)-octadecadienoate + O2 = (13R)-hydroperoxy-(9Z,11E)-octadecadienoate. The catalysed reaction is (9Z,12Z,15Z)-octadecatrienoate + O2 = (9S)-hydroperoxy-(10E,12Z,15Z)-octadecatrienoate. The enzyme catalyses (9Z,12Z,15Z)-octadecatrienoate + O2 = (11R)-hydroperoxy-(9Z,12Z,15Z)-octadecatrienoate. It catalyses the reaction (9Z,12Z,15Z)-octadecatrienoate + O2 = (13R)-hydroperoxy-(9Z,11E,15Z)-octadecatrienoate. It carries out the reaction (9S)-hydroperoxy-(10E,12Z,15Z)-octadecatrienoate + O2 = (9S,16S)-dihydroperoxy-(10E,12Z,14E)-octadecatrienoate. Functionally, lipoxygenase that metabolizes linoleic and alpha-linolenic acids to 9S-, 11- and 13R-hydroperoxy fatty acids. At the end of lipoxygenation, the intermediate product 11S-HPODE from linoleic acid is then transformed into 9S-HPODE and 13R-HPODE as the final products. The intermediate product 11R-HPOTrE from alpha-linolenic acid is transformed into 9S-HPOTrE and 13R-HPOTrE as the final products. 9S-HPOTrE is further oxidized by the enzyme to 9S,16S-DiHPOTrE as the end product. This chain is Manganese lipoxygenase, found in Pyricularia oryzae (strain 70-15 / ATCC MYA-4617 / FGSC 8958) (Rice blast fungus).